Reading from the N-terminus, the 119-residue chain is Large ribosomal subunit protein uL18 (119 aa).

Residues 1–26 (MGQNDKAARRQKIKLRSKTRGQGTAA) form a disordered region. Basic residues predominate over residues 9–19 (RRQKIKLRSKT).

It belongs to the universal ribosomal protein uL18 family. In terms of assembly, part of the 50S ribosomal subunit; part of the 5S rRNA/L5/L18/L25 subcomplex. Contacts the 5S and 23S rRNAs.

This is one of the proteins that bind and probably mediate the attachment of the 5S RNA into the large ribosomal subunit, where it forms part of the central protuberance. The sequence is that of Large ribosomal subunit protein uL18 from Prosthecochloris aestuarii (strain DSM 271 / SK 413).